The primary structure comprises 501 residues: ATP synthase subunit alpha (501 aa).

Residue 169–176 participates in ATP binding; the sequence is GDRQTGKT.

This sequence belongs to the ATPase alpha/beta chains family. In terms of assembly, F-type ATPases have 2 components, CF(1) - the catalytic core - and CF(0) - the membrane proton channel. CF(1) has five subunits: alpha(3), beta(3), gamma(1), delta(1), epsilon(1). CF(0) has three main subunits: a(1), b(2) and c(9-12). The alpha and beta chains form an alternating ring which encloses part of the gamma chain. CF(1) is attached to CF(0) by a central stalk formed by the gamma and epsilon chains, while a peripheral stalk is formed by the delta and b chains.

Its subcellular location is the cell membrane. It catalyses the reaction ATP + H2O + 4 H(+)(in) = ADP + phosphate + 5 H(+)(out). Functionally, produces ATP from ADP in the presence of a proton gradient across the membrane. The alpha chain is a regulatory subunit. The protein is ATP synthase subunit alpha of Streptococcus pneumoniae (strain 70585).